The sequence spans 178 residues: Protein RICE FLOWERING LOCUS T 1 (178 aa).

It belongs to the phosphatidylethanolamine-binding protein family. As to quaternary structure, interacts with FTIP1. In terms of tissue distribution, expressed in leaf vascular tissues. Specifically expressed in the phloem including companion cells.

It localises to the cytoplasm. The protein resides in the nucleus. The protein localises to the endoplasmic reticulum. Its function is as follows. Probable mobile flower-promoting signal (florigen) that moves from the leaf to the shoot apical meristem (SAM) and induces flowering. Promotes the transition from vegetative growth to flowering under long day (LD) conditions. Acts upstream of MADS14 and MADS15. May also participate in the promotion of flowering under short day (SD) conditions. This chain is Protein RICE FLOWERING LOCUS T 1, found in Oryza sativa subsp. japonica (Rice).